A 51-amino-acid chain; its full sequence is Mitochondrial import receptor subunit TOM5 homolog (51 aa).

The residue at position 1 (Met-1) is an N-acetylmethionine. Residue Lys-10 forms a Glycyl lysine isopeptide (Lys-Gly) (interchain with G-Cter in SUMO2) linkage. A helical membrane pass occupies residues 27 to 45; that stretch reads SIRNFLIYVALLRVTPYIL.

It belongs to the Tom5 family. As to quaternary structure, forms part of the preprotein translocase complex of the outer mitochondrial membrane (TOM complex) which consists of at least 7 different proteins (TOMM5, TOMM6, TOMM7, TOMM20, TOMM22, TOMM40 and TOMM70).

The protein resides in the mitochondrion outer membrane. The polypeptide is Mitochondrial import receptor subunit TOM5 homolog (Mus musculus (Mouse)).